The sequence spans 151 residues: Deoxyuridine 5'-triphosphate nucleotidohydrolase (151 aa).

Residues 70 to 72 (RSG), asparagine 83, 87 to 89 (LID), and methionine 97 contribute to the substrate site.

It belongs to the dUTPase family. Mg(2+) is required as a cofactor.

It carries out the reaction dUTP + H2O = dUMP + diphosphate + H(+). The protein operates within pyrimidine metabolism; dUMP biosynthesis; dUMP from dCTP (dUTP route): step 2/2. Functionally, this enzyme is involved in nucleotide metabolism: it produces dUMP, the immediate precursor of thymidine nucleotides and it decreases the intracellular concentration of dUTP so that uracil cannot be incorporated into DNA. The protein is Deoxyuridine 5'-triphosphate nucleotidohydrolase of Pseudomonas putida (strain ATCC 700007 / DSM 6899 / JCM 31910 / BCRC 17059 / LMG 24140 / F1).